Here is a 1668-residue protein sequence, read N- to C-terminus: Zinc finger CCCH domain-containing protein 13 (1668 aa).

Disordered regions lie at residues M1–A38 and T56–N157. Residues V10–R23 show a composition bias toward polar residues. The segment at S36–S64 adopts a C3H1-type zinc-finger fold. 2 positions are modified to phosphoserine: S64 and S77. Over residues R76 to E136 the composition is skewed to basic and acidic residues. Glycyl lysine isopeptide (Lys-Gly) (interchain with G-Cter in SUMO2) cross-links involve residues K179 and K194. Disordered stretches follow at residues E190 to A1112 and A1125 to D1466. 4 positions are modified to phosphoserine: S198, S207, S209, and S211. Over residues S204 to R213 the composition is skewed to low complexity. The segment covering K214–S224 has biased composition (basic residues). Residue T237 is modified to Phosphothreonine. S238 and S242 each carry phosphoserine. The segment covering A239–N254 has biased composition (polar residues). T263 bears the Phosphothreonine mark. The residue at position 265 (S265) is a Phosphoserine. A compositionally biased stretch (basic and acidic residues) spans K283–R315. A phosphoserine mark is found at S316, S318, S325, and S328. Low complexity predominate over residues H323–S346. T354 and T364 each carry phosphothreonine. Residues S370, S372, and S381 each carry the phosphoserine modification. A compositionally biased stretch (low complexity) spans S370–P382. Composition is skewed to basic and acidic residues over residues P394–R434 and S442–S575. Residues D584–H593 are compositionally biased toward low complexity. The span at D594 to R640 shows a compositional bias: basic and acidic residues. S643 carries the phosphoserine modification. Residues I645–D789 adopt a coiled-coil conformation. The segment covering G649–K821 has biased composition (basic and acidic residues). S831, S833, S837, S845, S848, S853, S873, S875, and S877 each carry phosphoserine. The segment covering L881–K957 has biased composition (basic and acidic residues). Phosphothreonine is present on T882. S943 is modified (phosphoserine). Positions K958–K969 are enriched in basic residues. Residues K970 to N981 are compositionally biased toward basic and acidic residues. Residues S986, S993, S1010, S1014, and S1017 each carry the phosphoserine modification. Residues K996 to S1010 are compositionally biased toward basic residues. T1033 is modified (phosphothreonine). Basic and acidic residues predominate over residues P1073–H1083. 2 stretches are compositionally biased toward low complexity: residues T1084–L1100 and A1125–N1153. Basic and acidic residues predominate over residues T1163–R1188. T1170 bears the Phosphothreonine mark. Phosphoserine occurs at positions 1191, 1194, 1208, and 1210. The segment covering S1213 to G1223 has biased composition (basic and acidic residues). S1230 is modified (phosphoserine). Composition is skewed to basic and acidic residues over residues G1231 to V1286 and D1294 to F1379. The stretch at Q1300 to S1366 forms a coiled coil. Phosphoserine is present on residues S1364, S1366, S1382, S1386, S1406, S1409, S1438, L1453, G1456, S1465, and D1466. Basic and acidic residues-rich tracts occupy residues S1386–L1421 and E1429–S1438.

Belongs to the ZC3H13 family. In terms of assembly, component of the WMM complex, a N6-methyltransferase complex composed of a catalytic subcomplex, named MAC, and of an associated subcomplex, named MACOM. The MAC subcomplex is composed of METTL3 and METTL14. The MACOM subcomplex is composed of WTAP, ZC3H13, CBLL1/HAKAI, VIRMA, and, in some cases of RBM15 (RBM15 or RBM15B). Also a component of a MACOM-like complex, named WTAP complex, composed of WTAP, ZC3H13, CBLL1/HAKAI, VIRMA, RBM15, BCLAF1 and THRAP3.

It localises to the nucleus speckle. It is found in the nucleus. Its subcellular location is the nucleoplasm. Functionally, associated component of the WMM complex, a complex that mediates N6-methyladenosine (m6A) methylation of RNAs, a modification that plays a role in the efficiency of mRNA splicing and RNA processing. Acts as a key regulator of m6A methylation by promoting m6A methylation of mRNAs at the 3'-UTR. Controls embryonic stem cells (ESCs) pluripotency via its role in m6A methylation. In the WMM complex, anchors component of the MACOM subcomplex in the nucleus. Also required for bridging WTAP to the RNA-binding component RBM15 (RBM15 or RBM15B). In Homo sapiens (Human), this protein is Zinc finger CCCH domain-containing protein 13.